The primary structure comprises 159 residues: MSRRKLSKKRIFKKDPFYNNELIQIIINRIMKKGNKALARKIIYRSLKDIELVTKQDPIKIVEQAVSNVTPFVEIRSRRLGGSTTQIPVFINNERGVTLAIRWLFQASKNKAGNKYSIIKRLSSEIVNASNGMGEAIKKRDEMHRMAEANKTIVKYNVL.

The protein belongs to the universal ribosomal protein uS7 family. In terms of assembly, part of the 30S ribosomal subunit.

It is found in the plastid. The protein resides in the chloroplast. One of the primary rRNA binding proteins, it binds directly to 16S rRNA where it nucleates assembly of the head domain of the 30S subunit. The sequence is that of Small ribosomal subunit protein uS7c (rps7) from Bigelowiella natans (Pedinomonas minutissima).